Consider the following 466-residue polypeptide: Ras GTPase-activating protein-binding protein 1 (466 aa).

One can recognise an NTF2 domain in the interval 11 to 133; that stretch reads VGREFVRQYY…FYVHNDIFRY (123 aa). Glycyl lysine isopeptide (Lys-Gly) (interchain with G-Cter in ubiquitin) cross-links involve residues Lys-36, Lys-50, Lys-59, Lys-64, Lys-76, and Lys-123. The interval 142 to 225 is acidic disordered region; the sequence is VTEPQEESEE…EPVLEETVPE (84 aa). Residue Thr-143 is modified to Phosphothreonine. 2 disordered regions span residues 144 to 172 and 184 to 243; these read EPQE…DSGT and EEHL…QTVQ. 2 stretches are compositionally biased toward acidic residues: residues 145–157 and 185–206; these read PQEE…EEPE and EHLE…EQEP. The residue at position 149 (Ser-149) is a Phosphoserine. Phosphoserine occurs at positions 231, 232, 250, and 253. The tract at residues 255–329 is disordered; it reads TSKNLPPSGA…REAGEQGDIE (75 aa). Composition is skewed to basic and acidic residues over residues 297 to 307 and 318 to 329; these read PQRDQRVREQR and PIREAGEQGDIE. The RRM domain maps to 340–415; the sequence is HQLFIGNLPH…VRLNVEEKKT (76 aa). Glycyl lysine isopeptide (Lys-Gly) (interchain with G-Cter in ubiquitin) cross-links involve residues Lys-353 and Lys-357. Ser-373 is subject to Phosphoserine. Lys-376 is covalently cross-linked (Glycyl lysine isopeptide (Lys-Gly) (interchain with G-Cter in ubiquitin)). An N6-acetyllysine; alternate modification is found at Lys-376. Lys-376 is covalently cross-linked (Glycyl lysine isopeptide (Lys-Gly) (interchain with G-Cter in SUMO2); alternate). Lys-393 is covalently cross-linked (Glycyl lysine isopeptide (Lys-Gly) (interchain with G-Cter in ubiquitin); alternate). The RG-rich region stretch occupies residues 410–466; it reads VEEKKTRAAREGDRRDNRLRGPGGPRGGLGGGMRGPPRGGMVQKPGFGVGRGLAPRQ. Positions 413 to 428 are enriched in basic and acidic residues; it reads KKTRAAREGDRRDNRL. The disordered stretch occupies residues 413 to 466; sequence KKTRAAREGDRRDNRLRGPGGPRGGLGGGMRGPPRGGMVQKPGFGVGRGLAPRQ. Position 429 is an asymmetric dimethylarginine (Arg-429). The segment covering 430 to 447 has biased composition (gly residues); that stretch reads GPGGPRGGLGGGMRGPPR. An Asymmetric dimethylarginine; alternate modification is found at Arg-435. 4 positions are modified to omega-N-methylarginine; alternate: Arg-435, Arg-447, Arg-460, and Arg-465. At Arg-460 the chain carries Dimethylated arginine; alternate.

In terms of assembly, homodimer and oligomer. Component of a TAU mRNP complex, at least composed of IGF2BP1, ELAVL4 and G3BP1. Binds to the SH3 domain of Ras GTPase-activating protein (RASA1) in proliferating cells. No interaction in quiescent cells. Interacts (via NTF2 domain) with USP10; inhibiting stress granule formation by lowering G3BP1 valence. Interacts (via NTF2 domain) with CAPRIN1; promoting stress granule formation by lowering the saturation-concentration of G3BP1. Interacts (via NTF2 domain) with UBAP2L; promoting stress granule formation. Associates (via RG-rich region) with 40S ribosome subunits. Interacts with RPTOR and SPAG5; this complex is increased by oxidative stress. Interacts with ATXN2L. Interacts with STYXL1. Interacts with CGAS (via N-terminus); this interaction promotes the DNA-binding and activation of CGAS. Interacts (via C-terminus) with RIGI. Interacts with PABPC1. Interacts with QKI (isoforms QKI6 and QKI7); directing N(7)-methylguanine-containing mRNAs to stress granules. Mg(2+) is required as a cofactor. Phosphorylation of the acidic disordered region regulates stress granule assembly. RASA1-dependent phosphorylation of Ser-149 induces a conformational change that prevents self-association. Dephosphorylation after HRAS activation is required for stress granule assembly. Ser-149 phosphorylation induces partial nuclear localization. In terms of processing, arg-435 is dimethylated, probably to asymmetric dimethylarginine. Post-translationally, ubiquitinated by TRIM21 via 'Lys-63'-linked polyubiquitination in the NTF2 domain in response to heat shock, leading to stress granule disassembly: ubiquitination promotes interaction with the FAF2 adapter, followed by interaction with VCP, which extracts G3BP1 from stress granules, leading to stress granule disassembly. In case of prolonged stress, ubiquitination by TRIM21 leads to autophagy-dependent degradation of G3BP1 via recruitment of ubiquitinated G3BP1 by SQSTM1 and/or CALCOCO2 to autophagosomes.

It localises to the cytoplasm. It is found in the cytosol. Its subcellular location is the perikaryon. The protein localises to the stress granule. The protein resides in the nucleus. The enzyme catalyses ATP + H2O = ADP + phosphate + H(+). Its activity is regulated as follows. Under physiological conditions, G3BP1 adopts a compact state that is stabilized by intramolecular interactions between the RG-rich and the acidic regions that inhibit phase separation. Upon stress, polysomes disassemble and mRNAs are released in an unfolded protein-free state. Binding of unfolded mRNA to G3BP1 outcompetes the intramolecular interactions and RNA-bound G3BP1 adopts an expanded conformation in which the RG-rich region becomes exposed to engage in protein-protein and protein-RNA interactions, allowing physical cross-linking of RNA molecules to form protein-RNA condensates, leading to liquid-liquid phase separation (LLPS). Functionally, protein involved in various processes, such as stress granule formation and innate immunity. Plays an essential role in stress granule formation. Stress granules are membraneless compartments that store mRNAs and proteins, such as stalled translation pre-initiation complexes, in response to stress. Promotes formation of stress granules phase-separated membraneless compartment by undergoing liquid-liquid phase separation (LLPS) upon unfolded RNA-binding: functions as a molecular switch that triggers RNA-dependent LLPS in response to a rise in intracellular free RNA concentrations. Also acts as an ATP- and magnesium-dependent helicase: unwinds DNA/DNA, RNA/DNA, and RNA/RNA substrates with comparable efficiency. Acts unidirectionally by moving in the 5' to 3' direction along the bound single-stranded DNA. Unwinds preferentially partial DNA and RNA duplexes having a 17 bp annealed portion and either a hanging 3' tail or hanging tails at both 5'- and 3'-ends. Plays an essential role in innate immunity by promoting CGAS and RIGI activity. Participates in the DNA-triggered cGAS/STING pathway by promoting the DNA binding and activation of CGAS. Triggers the condensation of cGAS, a process probably linked to the formation of membrane-less organelles. Also enhances RIGI-induced type I interferon production probably by helping RIGI at sensing pathogenic RNA. May also act as a phosphorylation-dependent sequence-specific endoribonuclease in vitro: Cleaves exclusively between cytosine and adenine and cleaves MYC mRNA preferentially at the 3'-UTR. The sequence is that of Ras GTPase-activating protein-binding protein 1 (G3BP1) from Pongo abelii (Sumatran orangutan).